The primary structure comprises 1064 residues: Fibropellin-1 (1064 aa).

Positions 1–19 are cleaved as a signal peptide; the sequence is MRTWLLAVLLLSVIAVTYG. Residues 20–55 enclose the EGF-like 1 domain; the sequence is QGECDSDPCENGSTCQEGEGSYICQCPMGYDGQNCD. Disulfide bonds link cysteine 23–cysteine 34, cysteine 28–cysteine 43, cysteine 45–cysteine 54, and cysteine 62–cysteine 88. Asparagine 30 carries N-linked (GlcNAc...) asparagine glycosylation. The region spanning 62-175 is the CUB domain; it reads CGYNVFDANG…NRGFRITFSS (114 aa). The N-linked (GlcNAc...) asparagine glycan is linked to asparagine 136. The EGF-like 2; calcium-binding domain occupies 176-212; sequence DGDDCDPNLCQNGAACTDLVNDYACTCPPGFTGRNCE. 61 cysteine pairs are disulfide-bonded: cysteine 180-cysteine 191, cysteine 185-cysteine 200, cysteine 202-cysteine 211, cysteine 218-cysteine 229, cysteine 223-cysteine 238, cysteine 240-cysteine 249, cysteine 256-cysteine 267, cysteine 261-cysteine 276, cysteine 278-cysteine 287, cysteine 294-cysteine 305, cysteine 299-cysteine 314, cysteine 316-cysteine 325, cysteine 332-cysteine 343, cysteine 337-cysteine 352, cysteine 354-cysteine 363, cysteine 370-cysteine 381, cysteine 375-cysteine 390, cysteine 392-cysteine 401, cysteine 408-cysteine 419, cysteine 413-cysteine 428, cysteine 430-cysteine 439, cysteine 446-cysteine 457, cysteine 451-cysteine 466, cysteine 468-cysteine 477, cysteine 484-cysteine 495, cysteine 489-cysteine 504, cysteine 506-cysteine 515, cysteine 522-cysteine 533, cysteine 527-cysteine 542, cysteine 544-cysteine 553, cysteine 560-cysteine 571, cysteine 565-cysteine 580, cysteine 582-cysteine 591, cysteine 598-cysteine 609, cysteine 603-cysteine 618, cysteine 620-cysteine 629, cysteine 636-cysteine 647, cysteine 641-cysteine 656, cysteine 658-cysteine 667, cysteine 674-cysteine 685, cysteine 679-cysteine 694, cysteine 696-cysteine 705, cysteine 712-cysteine 723, cysteine 717-cysteine 732, cysteine 734-cysteine 743, cysteine 750-cysteine 761, cysteine 755-cysteine 770, cysteine 772-cysteine 781, cysteine 788-cysteine 799, cysteine 793-cysteine 808, cysteine 810-cysteine 819, cysteine 826-cysteine 837, cysteine 831-cysteine 846, cysteine 848-cysteine 857, cysteine 864-cysteine 875, cysteine 869-cysteine 884, cysteine 886-cysteine 895, cysteine 902-cysteine 913, cysteine 907-cysteine 922, cysteine 924-cysteine 933, and cysteine 939-cysteine 1015. In terms of domain architecture, EGF-like 3; calcium-binding spans 214–250; it reads DIDECASDPCQNGGACVDGVNGYVCNCVPGFDGDECE. The region spanning 252–288 is the EGF-like 4; calcium-binding domain; it reads NINECASSPCLNGGICVDGVNMFECTCLAGFTGVRCE. Residues 290 to 326 form the EGF-like 5; calcium-binding domain; it reads NIDECASAPCQNGGICIDGINGYTCSCPLGFSGDNCE. The EGF-like 6; calcium-binding domain maps to 328 to 364; the sequence is NDDECSSIPCLNGGTCVDLVNAYMCVCAPGWTGPTCA. In terms of domain architecture, EGF-like 7; calcium-binding spans 366-402; the sequence is NIDECASAPCQNGGVCIDGVNGYMCDCQPGYTGTHCE. The EGF-like 8; calcium-binding domain occupies 404–440; the sequence is DIDECARPPCQNGGDCVDGVNGYVCICAPGFDGLNCE. An EGF-like 9; calcium-binding domain is found at 442–478; sequence NIDECASRPCQNGAVCVDGVNGFVCTCSAGYTGVLCE. The EGF-like 10; calcium-binding domain occupies 480 to 516; the sequence is DINECASMPCLNGGVCTDLVNGYICTCAAGFEGTNCE. The 37-residue stretch at 518–554 folds into the EGF-like 11; calcium-binding domain; the sequence is DTDECASFPCQNGATCTDQVNGYVCTCVPGYTGVLCE. An EGF-like 12; calcium-binding domain is found at 556–592; sequence DINECASFPCLNGGTCNDQVNGYVCVCAQDTSVSTCE. The 37-residue stretch at 594–630 folds into the EGF-like 13; calcium-binding domain; it reads DRDECASAPCLNGGACMDVVNGFVCTCLPGWEGTNCE. Residues 632–668 enclose the EGF-like 14; calcium-binding domain; it reads NTDECASSPCMNGGLCVDQVNSYVCFCLPGFTGIHCG. Residues 670 to 706 enclose the EGF-like 15; calcium-binding domain; it reads EIDECASSPCLNGGQCIDRVDSYECVCAAGYTAVRCQ. Residues 708 to 744 form the EGF-like 16; calcium-binding domain; the sequence is NIDECASAPCQNGGVCVDGVNGYVCNCAPGYTGDNCE. The EGF-like 17; calcium-binding domain maps to 746–782; that stretch reads EIDECASMPCLNGGACIEMVNGYTCQCVAGYTGVICE. The region spanning 784–820 is the EGF-like 18; calcium-binding domain; the sequence is DIDECASAPCQNGGVCTDTINGYICACVPGFTGSNCE. Residues 822-858 form the EGF-like 19; calcium-binding domain; that stretch reads NIDECASDPCLNGGICVDGVNGFVCQCPPNYSGTYCE. Asparagine 851 carries an N-linked (GlcNAc...) asparagine glycan. The EGF-like 20 domain maps to 860–896; sequence SLDACRSMPCQNGATCVNVGADYVCECVPGYAGQNCE. The EGF-like 21; calcium-binding domain maps to 898–934; the sequence is DINECASLPCQNGGLCIDGIAGYTCQCRLGYIGVNCE. Positions 937–1056 constitute an Avidin-like domain; sequence GFCDLEGMWY…GQDKWTRYEQ (120 aa).

As to quaternary structure, homotetramer.

The protein localises to the secreted. It is found in the extracellular space. Its subcellular location is the cytoplasmic vesicle. It localises to the extracellular matrix. The protein resides in the hyaline layer. The protein localises to the apical lamina. Functionally, forms the apical lamina, a component of the extracellular matrix. This chain is Fibropellin-1 (EGF1), found in Strongylocentrotus purpuratus (Purple sea urchin).